Consider the following 308-residue polypeptide: Homeobox protein HMX3 (308 aa).

Disordered regions lie at residues 1–57 and 107–184; these read MPET…GFAL and AEKS…KKKT. Positions 9-19 are enriched in pro residues; that stretch reads PSAPPPPPPPK. Basic and acidic residues-rich tracts occupy residues 135–144 and 156–177; these read AEQKERDPKS and EEGK…PEKK. Positions 181–240 form a DNA-binding region, homeobox; the sequence is KKKTRTVFSRSQVFQLESTFDMKRYLSSSERAGLAASLHLTETQVKIWFQNRRNKWKRQL.

This sequence belongs to the HMX homeobox family.

It is found in the nucleus. In terms of biological role, transcription factor involved in specification of neuronal cell types and which is required for inner ear and hypothalamus development. Binds to the 5'-CAAGTG-3' core sequence. The sequence is that of Homeobox protein HMX3 (HMX3) from Gallus gallus (Chicken).